The chain runs to 477 residues: Bifunctional protein HldE (477 aa).

The interval 1–318 (MKVTLPEFER…ENAVRGRADT (318 aa)) is ribokinase. N6-acetyllysine is present on K179. 195-198 (NLSE) serves as a coordination point for ATP. D264 is an active-site residue. The tract at residues 344–477 (MTNGVFDILH…IKKIQQDKKG (134 aa)) is cytidylyltransferase.

This sequence in the N-terminal section; belongs to the carbohydrate kinase PfkB family. It in the C-terminal section; belongs to the cytidylyltransferase family. As to quaternary structure, homodimer.

It catalyses the reaction D-glycero-beta-D-manno-heptose 7-phosphate + ATP = D-glycero-beta-D-manno-heptose 1,7-bisphosphate + ADP + H(+). The enzyme catalyses D-glycero-beta-D-manno-heptose 1-phosphate + ATP + H(+) = ADP-D-glycero-beta-D-manno-heptose + diphosphate. The protein operates within nucleotide-sugar biosynthesis; ADP-L-glycero-beta-D-manno-heptose biosynthesis; ADP-L-glycero-beta-D-manno-heptose from D-glycero-beta-D-manno-heptose 7-phosphate: step 1/4. Its pathway is nucleotide-sugar biosynthesis; ADP-L-glycero-beta-D-manno-heptose biosynthesis; ADP-L-glycero-beta-D-manno-heptose from D-glycero-beta-D-manno-heptose 7-phosphate: step 3/4. It participates in bacterial outer membrane biogenesis; LPS core biosynthesis. Its function is as follows. Catalyzes the phosphorylation of D-glycero-D-manno-heptose 7-phosphate at the C-1 position to selectively form D-glycero-beta-D-manno-heptose-1,7-bisphosphate. Functionally, catalyzes the ADP transfer from ATP to D-glycero-beta-D-manno-heptose 1-phosphate, yielding ADP-D-glycero-beta-D-manno-heptose. This chain is Bifunctional protein HldE, found in Shigella flexneri.